The primary structure comprises 150 residues: Large ribosomal subunit protein uL11 (150 aa).

Belongs to the universal ribosomal protein uL11 family. As to quaternary structure, part of the ribosomal stalk of the 50S ribosomal subunit. Interacts with L10 and the large rRNA to form the base of the stalk. L10 forms an elongated spine to which L12 dimers bind in a sequential fashion forming a multimeric L10(L12)X complex. In terms of processing, one or more lysine residues are methylated.

Functionally, forms part of the ribosomal stalk which helps the ribosome interact with GTP-bound translation factors. The polypeptide is Large ribosomal subunit protein uL11 (Azobacteroides pseudotrichonymphae genomovar. CFP2).